The following is a 268-amino-acid chain: Phosphatidylglycerol--prolipoprotein diacylglyceryl transferase (268 aa).

4 helical membrane passes run 14–34, 57–77, 90–110, and 117–137; these read LGPIKIHWYGLMYLLGIFAGW, LTFYVALGVILGGRIGYIIFY, FFLWDGGMSFHGGFIGVLIAF, and IGANFFDLGEFIAPVIPIGLG. Arginine 140 is an a 1,2-diacyl-sn-glycero-3-phospho-(1'-sn-glycerol) binding site. 3 helical membrane passes run 174 to 194, 200 to 220, and 238 to 258; these read QLFEFFFEGVVLFSVLWLVTI, YLVLGLFMFLYGCARFICEFF, and GQILSIPMILLGAVILIAVFI.

Belongs to the Lgt family.

The protein localises to the cell inner membrane. The enzyme catalyses L-cysteinyl-[prolipoprotein] + a 1,2-diacyl-sn-glycero-3-phospho-(1'-sn-glycerol) = an S-1,2-diacyl-sn-glyceryl-L-cysteinyl-[prolipoprotein] + sn-glycerol 1-phosphate + H(+). The protein operates within protein modification; lipoprotein biosynthesis (diacylglyceryl transfer). Its function is as follows. Catalyzes the transfer of the diacylglyceryl group from phosphatidylglycerol to the sulfhydryl group of the N-terminal cysteine of a prolipoprotein, the first step in the formation of mature lipoproteins. The polypeptide is Phosphatidylglycerol--prolipoprotein diacylglyceryl transferase (Francisella tularensis subsp. mediasiatica (strain FSC147)).